The sequence spans 332 residues: F-box/SPRY domain-containing protein 1 (332 aa).

A compositionally biased stretch (acidic residues) spans 1 to 10; it reads MTENNEETIV. Residues 1 to 81 form a disordered region; it reads MTENNEETIV…RRSPRRPEVS (81 aa). Residues 15-24 are compositionally biased toward polar residues; the sequence is CNLTSSTPMK. An F-box domain is found at 79 to 127; that stretch reads EVSASRLPLKVLNQIFQYLSLKDLRSAMLTCHSWNNALSMEDSDIWQQL. The B30.2/SPRY domain occupies 138 to 330; that stretch reads SDPFLFVELR…VTMVYVGSPQ (193 aa).

This sequence belongs to the FBXO45/Fsn family. As to quaternary structure, component of an SCF (SKP1-CUL1-F-box protein) E3 ubiquitin ligase complex composed of cul-1, fsn-1, rpm-1 and skr-1. Interacts (via SPRY domain) with scd-2 (via cytoplasmic domain). Interacts (via SPRY domain) with convertase egl-3 (via C-terminus).

It localises to the synapse. Its pathway is protein modification; protein ubiquitination. Component of a SCF (SKP1-CUL1-F-box protein) E3 ubiquitin ligase complex which is required for the restriction and/or maturation of synapses in GABAergic neuromuscular junction (NMJ) presynaptic neurons. Promotes NRJ synapse development and synaptic transmission by negatively regulating the daf-2/InsR pathway in muscles. By targeting convertase egl-3 for degradation, negatively modulates insulin-like protein ins-4 and ins-6 processing. May stabilize synapse formation by promoting the down-regulation of scd-2. Regulates axon termination in PLM and ALM neurons. The sequence is that of F-box/SPRY domain-containing protein 1 (fsn-1) from Caenorhabditis briggsae.